A 361-amino-acid chain; its full sequence is MAKKKIIFTGGGTVGHVTLNLLLIPRFLKDGWEVHYIGDKHGIEHEQIEQSDFDVIFHSIATGKLRRYFSLKNVLDVFKVGWGVLQSLTIMVKVRPQVLFSKGGFVSVPPVVAANLLRIPVFVHESDLSMGLANRIAYKFATTMYTTFEQSDNLTKTKHVGAITKVNQTISSSDDNTEIKTIKEYFDPRLKTLLFIGGSAGAKVFNQFISDTPELTKHYNVINISGDKTLNNLSQNLYRVDYVTEMYQPLMDLADVVITRGGSNTIFELLAMAKLHIIVPLGKEASRGDQLENAAYFEEKGYAQQLSEENLNFAELDKVIKDLLENQTVYQDKMTSSSEIKTPNDFYNLLLTDITSKSKGK.

Residues Ser-199 and Gln-290 each contribute to the UDP-N-acetyl-alpha-D-glucosamine site.

The protein belongs to the glycosyltransferase 28 family. MurG subfamily.

The protein localises to the cell membrane. It carries out the reaction Mur2Ac(oyl-L-Ala-gamma-D-Glu-L-Lys-D-Ala-D-Ala)-di-trans,octa-cis-undecaprenyl diphosphate + UDP-N-acetyl-alpha-D-glucosamine = beta-D-GlcNAc-(1-&gt;4)-Mur2Ac(oyl-L-Ala-gamma-D-Glu-L-Lys-D-Ala-D-Ala)-di-trans,octa-cis-undecaprenyl diphosphate + UDP + H(+). It participates in cell wall biogenesis; peptidoglycan biosynthesis. Functionally, cell wall formation. Catalyzes the transfer of a GlcNAc subunit on undecaprenyl-pyrophosphoryl-MurNAc-pentapeptide (lipid intermediate I) to form undecaprenyl-pyrophosphoryl-MurNAc-(pentapeptide)GlcNAc (lipid intermediate II). The polypeptide is UDP-N-acetylglucosamine--N-acetylmuramyl-(pentapeptide) pyrophosphoryl-undecaprenol N-acetylglucosamine transferase (Streptococcus mutans serotype c (strain ATCC 700610 / UA159)).